The chain runs to 450 residues: Glucose-6-phosphate isomerase (450 aa).

Position 39 is a phosphothreonine (Thr-39). Glu-291 functions as the Proton donor in the catalytic mechanism. Residues His-312 and Lys-426 contribute to the active site.

It belongs to the GPI family.

It localises to the cytoplasm. The catalysed reaction is alpha-D-glucose 6-phosphate = beta-D-fructose 6-phosphate. It participates in carbohydrate biosynthesis; gluconeogenesis. The protein operates within carbohydrate degradation; glycolysis; D-glyceraldehyde 3-phosphate and glycerone phosphate from D-glucose: step 2/4. Its function is as follows. Catalyzes the reversible isomerization of glucose-6-phosphate to fructose-6-phosphate. The polypeptide is Glucose-6-phosphate isomerase (Halalkalibacterium halodurans (strain ATCC BAA-125 / DSM 18197 / FERM 7344 / JCM 9153 / C-125) (Bacillus halodurans)).